We begin with the raw amino-acid sequence, 635 residues long: Chaperone protein HtpG (635 aa).

Positions 1–346 (MSQTTTTSAS…SADLPLNVSR (346 aa)) are a; substrate-binding. Residues 347-563 (EILQESRDVR…QNELSPHLLR (217 aa)) are b. Positions 564-635 (MLKAAGQEAP…KRLNGLLLKA (72 aa)) are c.

The protein belongs to the heat shock protein 90 family. Homodimer.

It localises to the cytoplasm. Functionally, molecular chaperone. Has ATPase activity. In Bordetella pertussis (strain Tohama I / ATCC BAA-589 / NCTC 13251), this protein is Chaperone protein HtpG.